We begin with the raw amino-acid sequence, 109 residues long: Large ribosomal subunit protein uL24 (109 aa).

It belongs to the universal ribosomal protein uL24 family. In terms of assembly, part of the 50S ribosomal subunit.

Its function is as follows. One of two assembly initiator proteins, it binds directly to the 5'-end of the 23S rRNA, where it nucleates assembly of the 50S subunit. One of the proteins that surrounds the polypeptide exit tunnel on the outside of the subunit. This chain is Large ribosomal subunit protein uL24, found in Hamiltonella defensa subsp. Acyrthosiphon pisum (strain 5AT).